The primary structure comprises 1087 residues: DNA polymerase II large subunit (1087 aa).

Belongs to the archaeal DNA polymerase II family. In terms of assembly, heterodimer of a large subunit and a small subunit.

It carries out the reaction DNA(n) + a 2'-deoxyribonucleoside 5'-triphosphate = DNA(n+1) + diphosphate. The catalysed reaction is Exonucleolytic cleavage in the 3'- to 5'-direction to yield nucleoside 5'-phosphates.. In terms of biological role, possesses two activities: a DNA synthesis (polymerase) and an exonucleolytic activity that degrades single-stranded DNA in the 3'- to 5'-direction. Has a template-primer preference which is characteristic of a replicative DNA polymerase. This Thermoplasma acidophilum (strain ATCC 25905 / DSM 1728 / JCM 9062 / NBRC 15155 / AMRC-C165) protein is DNA polymerase II large subunit (polC).